Here is a 157-residue protein sequence, read N- to C-terminus: Serine-protein kinase RsbW (157 aa).

Belongs to the anti-sigma-factor family.

It catalyses the reaction L-seryl-[protein] + ATP = O-phospho-L-seryl-[protein] + ADP + H(+). It carries out the reaction L-threonyl-[protein] + ATP = O-phospho-L-threonyl-[protein] + ADP + H(+). Functionally, negative regulator of sigma-B activity. Phosphorylates and inactivates its specific antagonist protein, RsbV. Upon phosphorylation of RsbV, RsbW is released and binds to sigma-B, thereby blocking its ability to form an RNA polymerase holoenzyme (E-sigma-B). The chain is Serine-protein kinase RsbW from Listeria innocua serovar 6a (strain ATCC BAA-680 / CLIP 11262).